Here is a 662-residue protein sequence, read N- to C-terminus: Bifunctional polymyxin resistance protein ArnA (662 aa).

Residues 1 to 307 (MTSKAVVFAY…ELGLVEGARL (307 aa)) form a formyltransferase ArnAFT region. The active-site Proton donor; for formyltransferase activity is H106. Residues R116 and 138-142 (IERAD) contribute to the (6R)-10-formyltetrahydrofolate site. Positions 316-662 (RRTRVLILGV…EALREREAQA (347 aa)) are dehydrogenase ArnADH. Residues D349 and 370–371 (DI) each bind NAD(+). Residues A395, Y400, and 434-435 (TS) contribute to the UDP-alpha-D-glucuronate site. E436 serves as the catalytic Proton acceptor; for decarboxylase activity. UDP-alpha-D-glucuronate is bound by residues R462, N493, 527–536 (RLVDGGAQKR), and Y614. The active-site Proton donor; for decarboxylase activity is R620.

The protein in the N-terminal section; belongs to the Fmt family. UDP-L-Ara4N formyltransferase subfamily. It in the C-terminal section; belongs to the NAD(P)-dependent epimerase/dehydratase family. UDP-glucuronic acid decarboxylase subfamily. Homohexamer, formed by a dimer of trimers.

The enzyme catalyses UDP-alpha-D-glucuronate + NAD(+) = UDP-beta-L-threo-pentopyranos-4-ulose + CO2 + NADH. It catalyses the reaction UDP-4-amino-4-deoxy-beta-L-arabinose + (6R)-10-formyltetrahydrofolate = UDP-4-deoxy-4-formamido-beta-L-arabinose + (6S)-5,6,7,8-tetrahydrofolate + H(+). The protein operates within nucleotide-sugar biosynthesis; UDP-4-deoxy-4-formamido-beta-L-arabinose biosynthesis; UDP-4-deoxy-4-formamido-beta-L-arabinose from UDP-alpha-D-glucuronate: step 1/3. It functions in the pathway nucleotide-sugar biosynthesis; UDP-4-deoxy-4-formamido-beta-L-arabinose biosynthesis; UDP-4-deoxy-4-formamido-beta-L-arabinose from UDP-alpha-D-glucuronate: step 3/3. It participates in bacterial outer membrane biogenesis; lipopolysaccharide biosynthesis. Its function is as follows. Bifunctional enzyme that catalyzes the oxidative decarboxylation of UDP-glucuronic acid (UDP-GlcUA) to UDP-4-keto-arabinose (UDP-Ara4O) and the addition of a formyl group to UDP-4-amino-4-deoxy-L-arabinose (UDP-L-Ara4N) to form UDP-L-4-formamido-arabinose (UDP-L-Ara4FN). The modified arabinose is attached to lipid A and is required for resistance to polymyxin and cationic antimicrobial peptides. The sequence is that of Bifunctional polymyxin resistance protein ArnA from Pseudomonas aeruginosa (strain ATCC 15692 / DSM 22644 / CIP 104116 / JCM 14847 / LMG 12228 / 1C / PRS 101 / PAO1).